The sequence spans 198 residues: Recombination protein RecR (198 aa).

A C4-type zinc finger spans residues 57 to 72 (CQRCNTFSEAELCAIC). In terms of domain architecture, Toprim spans 80–175 (DQLCIVEMPA…TVTRIARGMP (96 aa)).

This sequence belongs to the RecR family.

In terms of biological role, may play a role in DNA repair. It seems to be involved in an RecBC-independent recombinational process of DNA repair. It may act with RecF and RecO. The sequence is that of Recombination protein RecR from Chromobacterium violaceum (strain ATCC 12472 / DSM 30191 / JCM 1249 / CCUG 213 / NBRC 12614 / NCIMB 9131 / NCTC 9757 / MK).